Consider the following 184-residue polypeptide: Calmodulin-related protein (184 aa).

EF-hand domains follow at residues 8-43 (DQISEFKEAFSLFDKDGDGCITTKELGTVMRSLGQN), 44-79 (PTEAELQDMINEVDADGNGTIDFPEFLNLMARKMKD), 81-116 (DSEEELKEAFRVFDKDQNGFISAAELRHVMTNLGEK), and 117-152 (LTDEEVDEMIREADVDGDGQINYEEFVKVMMANRRR). Residues aspartate 21, aspartate 23, aspartate 25, cysteine 27, glutamate 32, aspartate 57, aspartate 59, asparagine 61, threonine 63, glutamate 68, aspartate 94, aspartate 96, asparagine 98, and glutamate 105 each coordinate Ca(2+). An N6,N6,N6-trimethyllysine modification is found at lysine 116. Residues aspartate 130, aspartate 132, aspartate 134, glutamine 136, and glutamate 141 each contribute to the Ca(2+) site. The interval 156 to 184 (EESKRSVNSNISRSNNGRKVRKRDRCTIL) is disordered. Residues 161–170 (SVNSNISRSN) show a composition bias toward low complexity. Basic residues predominate over residues 171–184 (NGRKVRKRDRCTIL).

It belongs to the calmodulin family.

Calmodulin mediates the control of a large number of enzymes, ion channels and other proteins by Ca(2+). Among the enzymes to be stimulated by the calmodulin-Ca(2+) complex are a number of protein kinases and phosphatases. The chain is Calmodulin-related protein (CAM53) from Petunia hybrida (Petunia).